Here is a 115-residue protein sequence, read N- to C-terminus: NADH-ubiquinone oxidoreductase chain 3 (115 aa).

The next 3 membrane-spanning stretches (helical) occupy residues 3–23 (LMAT…IAFW), 55–75 (FFLV…LLPL), and 86–106 (LTLL…AYEW).

Belongs to the complex I subunit 3 family. As to quaternary structure, core subunit of respiratory chain NADH dehydrogenase (Complex I) which is composed of 45 different subunits. Interacts with TMEM186. Interacts with TMEM242.

It localises to the mitochondrion inner membrane. The enzyme catalyses a ubiquinone + NADH + 5 H(+)(in) = a ubiquinol + NAD(+) + 4 H(+)(out). In terms of biological role, core subunit of the mitochondrial membrane respiratory chain NADH dehydrogenase (Complex I) which catalyzes electron transfer from NADH through the respiratory chain, using ubiquinone as an electron acceptor. Essential for the catalytic activity of complex I. The chain is NADH-ubiquinone oxidoreductase chain 3 from Mammuthus primigenius (Siberian woolly mammoth).